Here is a 401-residue protein sequence, read N- to C-terminus: Lipoyl synthase 1, mitochondrial (401 aa).

The N-terminal 25 residues, 1–25 (MWSSSSSLCRNPSFRRAWLSTVTVT), are a transit peptide targeting the mitochondrion. Residues 49 to 79 (IDDFSSTNAPTTTTHYTSSNGSPIVRQKAAP) are disordered. Over residues 51-70 (DFSSTNAPTTTTHYTSSNGS) the composition is skewed to polar residues. Residues C117, C122, C128, C148, C152, C155, and S376 each coordinate [4Fe-4S] cluster. The 233-residue stretch at 133-365 (EDQTATATIM…QETAMGMGFA (233 aa)) folds into the Radical SAM core domain.

It belongs to the radical SAM superfamily. Lipoyl synthase family. It depends on [4Fe-4S] cluster as a cofactor.

It is found in the mitochondrion. It carries out the reaction [[Fe-S] cluster scaffold protein carrying a second [4Fe-4S](2+) cluster] + N(6)-octanoyl-L-lysyl-[protein] + 2 oxidized [2Fe-2S]-[ferredoxin] + 2 S-adenosyl-L-methionine + 4 H(+) = [[Fe-S] cluster scaffold protein] + N(6)-[(R)-dihydrolipoyl]-L-lysyl-[protein] + 4 Fe(3+) + 2 hydrogen sulfide + 2 5'-deoxyadenosine + 2 L-methionine + 2 reduced [2Fe-2S]-[ferredoxin]. The protein operates within protein modification; protein lipoylation via endogenous pathway; protein N(6)-(lipoyl)lysine from octanoyl-[acyl-carrier-protein]: step 2/2. Functionally, catalyzes the radical-mediated insertion of two sulfur atoms into the C-6 and C-8 positions of the octanoyl moiety bound to the lipoyl domains of lipoate-dependent enzymes, thereby converting the octanoylated domains into lipoylated derivatives. This is Lipoyl synthase 1, mitochondrial from Phaeodactylum tricornutum (strain CCAP 1055/1).